A 143-amino-acid polypeptide reads, in one-letter code: Large ribosomal subunit protein bL28c (143 aa).

The transit peptide at M1 to A66 directs the protein to the chloroplast.

Belongs to the bacterial ribosomal protein bL28 family. In terms of assembly, part of the 50S ribosomal subunit.

The protein resides in the plastid. The protein localises to the chloroplast. The polypeptide is Large ribosomal subunit protein bL28c (RPL28) (Arabidopsis thaliana (Mouse-ear cress)).